Consider the following 263-residue polypeptide: Alpha-tubulin N-acetyltransferase 2 (263 aa).

The N-acetyltransferase domain maps to 1 to 181 (MEIAFDLSSI…NKYAVFPNFF (181 aa)). Position 115 to 128 (115 to 128 (FFIVPTEQRSGNGF)) interacts with acetyl-CoA. Disordered stretches follow at residues 191-224 (TPRQ…RPRH) and 236-263 (FPRG…EPIW). Over residues 200 to 212 (RASSAVSSHTTSR) the composition is skewed to low complexity. Residues 253–263 (LTRDQRHEPIW) are compositionally biased toward basic and acidic residues.

It belongs to the acetyltransferase ATAT1 family.

It catalyses the reaction L-lysyl-[alpha-tubulin] + acetyl-CoA = N(6)-acetyl-L-lysyl-[alpha-tubulin] + CoA + H(+). Specifically acetylates 'Lys-40' in alpha-tubulin/mec-12 on the lumenal side of microtubules. Promotes microtubule destabilization and accelerates microtubule dynamics; this activity may be independent of acetylation activity. Acetylates alpha-tubulin with a slow enzymatic rate, due to a catalytic site that is not optimized for acetyl transfer. Enters the microtubule through each end and diffuses quickly throughout the lumen of microtubules. Acetylates only long/old microtubules because of its slow acetylation rate since it does not have time to act on dynamically unstable microtubules before the enzyme is released. Required for the maintenance of touch receptor neurons and possibly other type of neurons involved in locomotion. The polypeptide is Alpha-tubulin N-acetyltransferase 2 (atat-2) (Caenorhabditis briggsae).